Consider the following 446-residue polypeptide: Solute carrier family 52, riboflavin transporter, member 2 (446 aa).

The next 4 membrane-spanning stretches (helical) occupy residues 14 to 34, 47 to 67, 79 to 99, and 104 to 124; these read LLVALFGMGSWAAINGIWVEL, LPSYLSVLVALGNLGLLVVTL, APIQVVQALSVVGTALLAPLW, and VMAGQVHSVAFLALTFVLALA. An N-linked (GlcNAc...) asparagine glycan is attached at Asn-129. Helical transmembrane passes span 147–167 and 196–216; these read FFLGQGLSALLPCVLALGQGV and FFGALTALLVISAAAFQGLLL. The segment at 228 to 267 is disordered; sequence GSGTGLRGGAPGVEEEEEEEASPLQEPPSQAAGNTPSPDP. Over residues 229–238 the composition is skewed to gly residues; sequence SGTGLRGGAP. Residues 254–263 show a composition bias toward polar residues; the sequence is PPSQAAGNTP. The next 5 helical transmembrane spans lie at 278 to 298, 313 to 333, 340 to 360, 367 to 387, and 405 to 425; these read ACLLGLLATTSALTNGVLPAV, LAVVLGSASNPLACFLAMGIL, LGGLSLLGTLFGAYLMALAIL, VGTSAGMVLVVVLWALCLGVF, and ALLAAGVAIQVGSLLGAVTMF.

This sequence belongs to the riboflavin transporter family.

It is found in the cell membrane. The catalysed reaction is riboflavin(in) = riboflavin(out). With respect to regulation, riboflavin transport is Na(+)-independent but moderately pH-sensitive. Activity is strongly inhibited by riboflavin analogs, such as lumiflavin. Weakly inhibited by flavin adenine dinucleotide (FAD) and flavin mononucleotide (FMN). In terms of biological role, plasma membrane transporter mediating the uptake by cells of the water soluble vitamin B2/riboflavin that plays a key role in biochemical oxidation-reduction reactions of the carbohydrate, lipid, and amino acid metabolism. May also act as a receptor for 4-hydroxybutyrate. Its function is as follows. (Microbial infection) In case of infection by porcine endogenous retrovirus (PERV-A), acts as a cell receptor to retroviral envelopes. This is Solute carrier family 52, riboflavin transporter, member 2 (SLC52A2) from Sus scrofa (Pig).